Here is a 343-residue protein sequence, read N- to C-terminus: Heat-inducible transcription repressor HrcA (343 aa).

It belongs to the HrcA family.

Functionally, negative regulator of class I heat shock genes (grpE-dnaK-dnaJ and groELS operons). Prevents heat-shock induction of these operons. The sequence is that of Heat-inducible transcription repressor HrcA from Clostridium botulinum (strain Eklund 17B / Type B).